The following is a 258-amino-acid chain: L-rhamnose-1-dehydrogenase (258 aa).

Residues Ile-19, Asp-68, and Asn-95 each coordinate NADP(+). Residues Ser-147 and Tyr-161 each act as proton donor in the active site. Positions 161, 165, 194, and 196 each coordinate NADP(+). Lys-165 (lowers pKa of active site Tyr) is an active-site residue.

The protein belongs to the short-chain dehydrogenases/reductases (SDR) family.

The enzyme catalyses L-rhamnofuranose + NAD(+) = L-rhamnono-1,4-lactone + NADH + H(+). In terms of biological role, NAD-dependent dehydrogenase that has high activity with L-rhamnose and L-lyxose, and shows only low activity with L-mannose. Has no activity with NADP. Catalyzes the first step in an alternative pathway for rhamnose utilization that does not involve phosphorylated intermediates. In Scheffersomyces stipitis (strain ATCC 58785 / CBS 6054 / NBRC 10063 / NRRL Y-11545) (Yeast), this protein is L-rhamnose-1-dehydrogenase (DHG2).